We begin with the raw amino-acid sequence, 446 residues long: MPETYWGKAREFLSKHNLDVGDIIELEKNGIQVKGIIMPTYSNNDDIIVLKLDNGYNIGISVSNIQNVKLIEKKRKEEKRREGAVSTTNSEVMIISTGGTIVSKIEYETGAVRPALTPDEIIEFMPEIKEIARIDAEILFSILSENMKPEYWIKIAEEAKKALDKGNKGVVIAHGTDTMAYTSAALSFSFRKMTGPIVLVGSQRSSDRPSSDSSMNLLTSILVAKNAPFGEVVVNMHGESSDTYTLVHRGVKVRKMHTSRRDAFQSINDLPLAKVHYIDKKIEILSDNYRSKESENTLDAKFDNRVFLLKYYPGLSPDMVEHLISSGIRGIIIEGTGLGHTSSDFYEVFKKASKDGVFIGMTSQCLFGRVNMNVYTTGRLLQEAGVVPLEDMLPETALVKLMWTLAHENDLDRIKEIMLTNLAGEINYIHHYEMFPRWYHDRIRLQ.

The Asparaginase/glutaminase domain maps to 90–421 (SEVMIISTGG…DRIKEIMLTN (332 aa)). Catalysis depends on residues threonine 100, threonine 176, aspartate 177, and lysine 255.

This sequence belongs to the asparaginase 1 family. GatD subfamily. Heterodimer of GatD and GatE.

It carries out the reaction L-glutamyl-tRNA(Gln) + L-glutamine + ATP + H2O = L-glutaminyl-tRNA(Gln) + L-glutamate + ADP + phosphate + H(+). Functionally, allows the formation of correctly charged Gln-tRNA(Gln) through the transamidation of misacylated Glu-tRNA(Gln) in organisms which lack glutaminyl-tRNA synthetase. The reaction takes place in the presence of glutamine and ATP through an activated gamma-phospho-Glu-tRNA(Gln). The GatDE system is specific for glutamate and does not act on aspartate. The sequence is that of Glutamyl-tRNA(Gln) amidotransferase subunit D from Sulfolobus acidocaldarius (strain ATCC 33909 / DSM 639 / JCM 8929 / NBRC 15157 / NCIMB 11770).